Reading from the N-terminus, the 364-residue chain is 3'(2'),5'-bisphosphate nucleotidase 1 (364 aa).

Catalysis depends on Asp-54, which acts as the Proton acceptor. 4 residues coordinate Mg(2+): Glu-77, Asp-141, Ile-143, and Asp-144. Thr-146 functions as the Proton acceptor in the catalytic mechanism. Adenosine 3',5'-bisphosphate is bound by residues Thr-146, His-243, Ser-272, Lys-275, Arg-289, and Asp-302. Residues His-243, Ser-272, Lys-275, Arg-289, and Asp-302 each contribute to the AMP site. Asp-302 serves as a coordination point for Mg(2+).

This sequence belongs to the inositol monophosphatase superfamily. It depends on Mg(2+) as a cofactor.

The enzyme catalyses 3'-phosphoadenylyl sulfate + H2O = adenosine 5'-phosphosulfate + phosphate. The catalysed reaction is adenosine 3',5'-bisphosphate + H2O = AMP + phosphate. It catalyses the reaction adenosine 2',5'-bisphosphate + H2O = AMP + phosphate. In terms of biological role, phosphatase that converts adenosine 3'-phosphate 5'-phosphosulfate (PAPS) to adenosine 5'-phosphosulfate (APS) and 3'(2')-phosphoadenosine 5'-phosphate (PAP) to AMP. Regulates the flux of sulfur in the sulfur-activation pathway by converting PAPS to APS. Involved in salt tolerance. In Candida albicans (strain WO-1) (Yeast), this protein is 3'(2'),5'-bisphosphate nucleotidase 1 (HAL21).